Here is a 404-residue protein sequence, read N- to C-terminus: MSLVNPHGKEKVLKPLLLTGEELTAEKARAQSFAQVRLSSRETGDLIMLGIGGFTPLTGFMGHDDWKGSVQDCRMADGTFWPIPITLSTSKEKADELSIGQEVALVDDESGELMGSMVIEEKYSIDKAFECQEVFKTTDPEHPGVLMVMNQGDVNLAGRVKVFSEGTFPTEFAGIYMTPAETRKMFEANGWSTVAAFQTRNPMHRSHEYLVKIAIEVCDGVLIHQLLGKLKPGDIPADVRKECINALMEKYFVKGTCIQGGYPLDMRYAGPREALLHALFRQNFGCSHLIVGRDHAGVGDYYGPFDAHHIFDQIPADALETKPLKIDWTFYCYKCDGMASMKTCPHTAEDRLNLSGTKLRKMLSEGEQVPEHFSRPEVLEILQRYYASLTQKVDIKLHSHAVGK.

Belongs to the sulfate adenylyltransferase family.

The enzyme catalyses sulfate + ATP + H(+) = adenosine 5'-phosphosulfate + diphosphate. Its pathway is sulfur metabolism; hydrogen sulfide biosynthesis; sulfite from sulfate: step 1/3. This is Sulfate adenylyltransferase from Chlorobium chlorochromatii (strain CaD3).